The sequence spans 450 residues: F-box/FBD/LRR-repeat protein At5g22660 (450 aa).

An F-box domain is found at 12 to 58; the sequence is EDRISSLPDHLLSQILSNLPTENAVTTSILSTRWKDLWLSTPVLDID. LRR repeat units lie at residues 157 to 181 and 294 to 317; these read LPNL…KFIS and LSSL…LKHE. Positions 364–416 constitute an FBD domain; it reads EEISLSSSVPKCLQSSLENVEIIRPNYGSGEEMKLSKYFLENSLVLKKFKLCR.

The polypeptide is F-box/FBD/LRR-repeat protein At5g22660 (Arabidopsis thaliana (Mouse-ear cress)).